We begin with the raw amino-acid sequence, 250 residues long: MQGQAQQQAYDRGITIFSPDGRLYQVEYAREAVKRGTASVGIRTPDGIVLAADKRSRSPLMEPTSVEKIHKTDDHVGIASAGHVADARQLIDFARRQAQVNRLRYGEPVGIETLTKNVTDNIQQYTQVGGARPFGVALLIGGIEDGSPRLYETDPSGTPYEWKAVSIGADRSDLQEHLEENYTEELSLDEGVGLALRTIAISNDDELTAAGVDVATVASDTEEFIELTNDEISAYIADNDLEPAEETDSE.

It belongs to the peptidase T1A family. In terms of assembly, the 20S proteasome core is composed of 14 alpha and 14 beta subunits that assemble into four stacked heptameric rings, resulting in a barrel-shaped structure. The two inner rings, each composed of seven catalytic beta subunits, are sandwiched by two outer rings, each composed of seven alpha subunits. The catalytic chamber with the active sites is on the inside of the barrel. Has a gated structure, the ends of the cylinder being occluded by the N-termini of the alpha-subunits. Is capped at one or both ends by the proteasome regulatory ATPase, PAN.

It is found in the cytoplasm. With respect to regulation, the formation of the proteasomal ATPase PAN-20S proteasome complex, via the docking of the C-termini of PAN into the intersubunit pockets in the alpha-rings, triggers opening of the gate for substrate entry. Interconversion between the open-gate and close-gate conformations leads to a dynamic regulation of the 20S proteasome proteolysis activity. Component of the proteasome core, a large protease complex with broad specificity involved in protein degradation. This is Proteasome subunit alpha from Haloquadratum walsbyi (strain DSM 16790 / HBSQ001).